Here is a 211-residue protein sequence, read N- to C-terminus: Ferric nitrobindin-like protein (211 aa).

Positions 21-27 (GRWRGPG) match the GXWXGXG motif. The tract at residues 104–130 (GVVQEGSDTRTEPGGAEPDPAGRRAPS) is disordered.

This sequence belongs to the nitrobindin family.

The polypeptide is Ferric nitrobindin-like protein (Beutenbergia cavernae (strain ATCC BAA-8 / DSM 12333 / CCUG 43141 / JCM 11478 / NBRC 16432 / NCIMB 13614 / HKI 0122)).